A 496-amino-acid polypeptide reads, in one-letter code: Glutamate--tRNA ligase (496 aa).

The 'HIGH' region motif lies at 10-20 (PSPTGPLHIGG). A 'KMSKS' region motif is present at residues 251 to 255 (KMSKR). Residue lysine 254 coordinates ATP.

This sequence belongs to the class-I aminoacyl-tRNA synthetase family. Glutamate--tRNA ligase type 1 subfamily. Monomer.

Its subcellular location is the cytoplasm. The catalysed reaction is tRNA(Glu) + L-glutamate + ATP = L-glutamyl-tRNA(Glu) + AMP + diphosphate. Its function is as follows. Catalyzes the attachment of glutamate to tRNA(Glu) in a two-step reaction: glutamate is first activated by ATP to form Glu-AMP and then transferred to the acceptor end of tRNA(Glu). The sequence is that of Glutamate--tRNA ligase from Heliobacterium modesticaldum (strain ATCC 51547 / Ice1).